Consider the following 6874-residue polypeptide: Nesprin-2 (6874 aa).

The interval 1 to 286 is actin-binding; it reads MAASPVLPTE…MTYVAQFLKY (286 aa). Over 1 to 6823 the chain is Cytoplasmic; the sequence is MAASPVLPTE…RRSFLSRVIR (6823 aa). Calponin-homology (CH) domains are found at residues 31-136 and 183-288; these read DTQK…LHFH and WSAK…KYSK. Spectrin repeat units follow at residues 299–380, 381–474, 475–577, and 578–680; these read AKVR…HQVA, AWRA…RINN, VLGK…QYIH, and NTKA…IQDQ. Positions 299-6767 form a coiled coil; it reads AKVRDALVWL…PDASLTSFDE (6469 aa). The tract at residues 675–723 is disordered; sequence VKIQDQPPGNSSGTSLSKESAMAAEPGGSRGEDVKAAEKQEVEDEESAG. Residues 681 to 692 show a composition bias toward polar residues; that stretch reads PPGNSSGTSLSK. Positions 704–714 are enriched in basic and acidic residues; sequence RGEDVKAAEKQ. Spectrin repeat units follow at residues 727–834, 835–928, 929–1030, 1120–1211, 1262–1322, 1323–1409, 1410–1514, 1515–1626, 1627–1728, 1729–1820, 1821–1928, 1929–2026, 2027–2122, 2123–2233, 2234–2350, 2422–2503, 2504–2610, 2611–2707, 2708–2821, 2822–2923, 2924–3027, 3028–3133, 3134–3239, 3240–3343, 3344–3456, 3457–3563, 3564–3669, 3670–3767, 3768–3870, 3871–3976, and 3977–4074; these read VNEE…KNLS, DEPL…LRHE, ISLY…KCAS, TQRG…LLNT, DIRD…DALD, ALEG…QSKE, EGPP…ASVT, ESLE…KTEE, YGEN…AGGS, NSYA…TKKN, ALQD…AGEL, NNSF…EEED, KLPA…LANT, YLSH…SVQK, LEGH…LNSI, DERE…TLKK, TKER…KCFQ, QATE…EALE, PLNR…QLEL, KLEE…FLQN, NGSE…GKIK, QLDT…NMLL, ELQP…SLRA, DVLN…AQEA, EEER…QWGG, ELKR…TTRK, NKDL…SSEV, SKSS…ESRT, SQLN…QIME, ALPH…VTQE, and QNEL…KPSA. Residues 2338-2397 form a disordered region; it reads SAKQETENGLNSILKSKSSTEKHVKFSLPVEEMPATSEVPKPTRESAAVGESGGARETNT. A compositionally biased stretch (polar residues) spans 2344–2354; it reads ENGLNSILKSK. Disordered stretches follow at residues 4062-4152, 4171-4193, 4326-4348, and 4401-4429; these read KQEQ…ATIV, APDSGSTEEGPAPSPRLSQTDEG, FSEDQHPSTLKKPSEPHDVDQPA, and HQENEDANRQSASSSKVPSPGNAASDSTL. Residues 4081–4091 are compositionally biased toward basic and acidic residues; sequence VAERDASERKL. At Ser-4096 the chain carries Phosphoserine. The segment covering 4110–4122 has biased composition (basic and acidic residues); it reads SSVKSEDGRRRTE. One copy of the Spectrin 36 repeat lies at 4218–4337; sequence RSRPRPADIL…EDQHPSTLKK (120 aa). Over residues 4326 to 4345 the composition is skewed to basic and acidic residues; it reads FSEDQHPSTLKKPSEPHDVD. Positions 4409 to 4429 are enriched in polar residues; it reads RQSASSSKVPSPGNAASDSTL. Spectrin repeat units follow at residues 4507–4626, 4627–4714, 4715–4823, 4824–4929, 4930–5037, 5038–5150, 5151–5252, 5253–5377, 5378–5473, 5474–5576, 5577–5691, 5692–5786, 5787–5894, 5895–6004, 6005–6122, 6123–6230, and 6231–6342; these read SMTE…RSYQ, NEVK…RARY, LELS…QSML, QKWE…QTLL, KHLL…QEKL, HQLQ…KIQH, LEQL…SQVH, QLRA…KAPH, NAHA…MLLA, KSNE…YSEL, QGNG…QWRF, FTTS…LSLG, EVIS…RVAI, RKQE…VKKL, KETF…EETW, RLWQ…LRYF, and TNQR…PGLD. The segment at 5435 to 5459 is disordered; it reads NSTLSDQLPQPEERSTPGLHSGQRH. Ser-5772 carries the phosphoserine modification. The tract at residues 6336 to 6473 is disordered; the sequence is SHTPGLDDEK…TEAPVPTDAS (138 aa). A compositionally biased stretch (acidic residues) spans 6341–6354; it reads LDDEKEASENETDI. Ser-6348, Ser-6371, Ser-6400, Ser-6417, Ser-6418, Ser-6419, and Ser-6448 each carry phosphoserine. Residues 6355–6372 are compositionally biased toward basic and acidic residues; the sequence is EDPREIQADSWRKRRESE. Spectrin repeat units lie at residues 6450–6534, 6535–6650, and 6651–6767; these read SHSK…KLRL, KQTV…QCQD, and FHQL…SFDE. Residues 6790 to 6812 form a disordered region; the sequence is EEEEEEEETDSRMPHLDSPGSSQ. The 60-residue stretch at 6815 to 6874 folds into the KASH domain; the sequence is RSFLSRVIRAALPLQLLLLLLLLLACLLPASEDDYSCTQANNFARSFYPMLRYTNGPPPT. A helical; Anchor for type IV membrane protein membrane pass occupies residues 6824–6844; the sequence is AALPLQLLLLLLLLLACLLPA. Residues 6845 to 6874 are Perinuclear space-facing; it reads SEDDYSCTQANNFARSFYPMLRYTNGPPPT. Residues 6861 to 6874 are sufficient for interaction with SUN2; sequence FYPMLRYTNGPPPT.

Belongs to the nesprin family. As to quaternary structure, core component of LINC complexes which are composed of inner nuclear membrane SUN domain-containing proteins coupled to outer nuclear membrane KASH domain-containing nesprins. SUN and KASH domain-containing proteins seem to bind each other promiscuously; however, some LINC complex constituents are tissue- or cell type-specific. At least SUN1/2-containing core LINC complexes are proposed to be hexameric composed of three protomers of each KASH and SUN domain-containing protein. The SUN2:SYNE2/KASH2 complex is a heterohexamer; the homotrimeric cloverleave-like conformation of the SUN domain is a prerequisite for LINC complex formation in which three separate SYNE2/KASH2 peptides bind at the interface of adjacent SUN domains. Interacts with EMD, LMNA, MKS3 and F-actin via its N-terminal domain. Interacts with DCTN1 and DYNC1I1/2; suggesting the association with the dynein-dynactin motor complex. Associates with kinesin motor complexes. Interacts with TMEM67. Interacts (via KASH domain) with TMEM258. Interacts with BROX; this interaction promotes SYN2 ubiquitination and facilitates the relaxation of mechanical stress imposed by compressive actin fibers at the rupture site. In terms of processing, the disulfid bond with SUN2 is required for stability of the SUN2:SYNE2/KASH2 LINC complex under tensile forces though not required for the interaction. As to expression, C-terminal isoforms are highly expressed in the brain, hert and skeletal muscle. Isoform 1 (Nesprin-2 Giant) is most prevalent in the brain, skin, kidney and skeletal muscle.

The protein localises to the nucleus outer membrane. Its subcellular location is the sarcoplasmic reticulum membrane. The protein resides in the cell membrane. It localises to the cytoplasm. It is found in the cytoskeleton. The protein localises to the mitochondrion. Its subcellular location is the nucleus. The protein resides in the nucleoplasm. Multi-isomeric modular protein which forms a linking network between organelles and the actin cytoskeleton to maintain the subcellular spatial organization. As a component of the LINC (LInker of Nucleoskeleton and Cytoskeleton) complex involved in the connection between the nuclear lamina and the cytoskeleton. The nucleocytoplasmic interactions established by the LINC complex play an important role in the transmission of mechanical forces across the nuclear envelope and in nuclear movement and positioning. Specifically, SYNE2 and SUN2 assemble in arrays of transmembrane actin-associated nuclear (TAN) lines which are bound to F-actin cables and couple the nucleus to retrograde actin flow during actin-dependent nuclear movement. May be involved in nucleus-centrosome attachment. During interkinetic nuclear migration (INM) at G2 phase and nuclear migration in neural progenitors its LINC complex association with SUN1/2 and probable association with cytoplasmic dynein-dynactin motor complexes functions to pull the nucleus toward the centrosome; SYNE1 and SYNE2 seem to act redundantly in cerebellum, midbrain, brain stem, and other brain regions except cerebral cortex and hippocampus. During INM at G1 phase mediates respective LINC complex association with kinesin to push the nucleus away from the centrosome. Involved in nuclear migration in retinal photoreceptor progenitors. Required for centrosome migration to the apical cell surface during early ciliogenesis. In Mus musculus (Mouse), this protein is Nesprin-2.